The primary structure comprises 223 residues: Phosphoribosylformylglycinamidine synthase subunit PurQ (223 aa).

The Glutamine amidotransferase type-1 domain occupies 2-223 (KVAIIRFPGT…LLENFINFNF (222 aa)). C84 acts as the Nucleophile in catalysis. Residues H192 and E194 contribute to the active site.

In terms of assembly, part of the FGAM synthase complex composed of 1 PurL, 1 PurQ and 2 PurS subunits.

The protein localises to the cytoplasm. The catalysed reaction is N(2)-formyl-N(1)-(5-phospho-beta-D-ribosyl)glycinamide + L-glutamine + ATP + H2O = 2-formamido-N(1)-(5-O-phospho-beta-D-ribosyl)acetamidine + L-glutamate + ADP + phosphate + H(+). It carries out the reaction L-glutamine + H2O = L-glutamate + NH4(+). Its pathway is purine metabolism; IMP biosynthesis via de novo pathway; 5-amino-1-(5-phospho-D-ribosyl)imidazole from N(2)-formyl-N(1)-(5-phospho-D-ribosyl)glycinamide: step 1/2. Functionally, part of the phosphoribosylformylglycinamidine synthase complex involved in the purines biosynthetic pathway. Catalyzes the ATP-dependent conversion of formylglycinamide ribonucleotide (FGAR) and glutamine to yield formylglycinamidine ribonucleotide (FGAM) and glutamate. The FGAM synthase complex is composed of three subunits. PurQ produces an ammonia molecule by converting glutamine to glutamate. PurL transfers the ammonia molecule to FGAR to form FGAM in an ATP-dependent manner. PurS interacts with PurQ and PurL and is thought to assist in the transfer of the ammonia molecule from PurQ to PurL. The protein is Phosphoribosylformylglycinamidine synthase subunit PurQ of Campylobacter jejuni subsp. jejuni serotype O:2 (strain ATCC 700819 / NCTC 11168).